The chain runs to 335 residues: Probable cytosolic iron-sulfur protein assembly protein Ciao1 (335 aa).

WD repeat units lie at residues 12–51 (GHKG…WSTK), 57–96 (GHKR…FECN), 101–140 (GHEN…EFEC), 146–185 (PHTQ…NDWD), 192–231 (SHTS…NTAG), 250–289 (QHSR…KPDE), and 301–335 (AHDQ…KVSE).

Belongs to the WD repeat CIA1 family.

Essential component of the cytosolic iron-sulfur (Fe/S) protein assembly machinery. Required for the maturation of extramitochondrial Fe/S proteins. The chain is Probable cytosolic iron-sulfur protein assembly protein Ciao1 from Drosophila simulans (Fruit fly).